We begin with the raw amino-acid sequence, 92 residues long: UPF0235 protein PYRAB05010 (92 aa).

The protein belongs to the UPF0235 family.

This chain is UPF0235 protein PYRAB05010, found in Pyrococcus abyssi (strain GE5 / Orsay).